The chain runs to 445 residues: Sterile alpha motif domain-containing protein 7 (445 aa).

A required for localization to nuclear polycomb bodies region spans residues 98–172 (HAARAEMEMY…HLQGNPILLA (75 aa)). Residues 193 to 282 (YQKPPESDTE…WDDGKGKPSE (90 aa)) are disordered. Residues 227-244 (IKDPDIEVDNQQKPRVAD) are compositionally biased toward basic and acidic residues. Residues 324–378 (WTVDDVYNFIRSLPGCSDYAQVFKDHAIDGETLPLLTEQHLRGTMGLKLGPALKI) form the SAM domain. The segment at 425-445 (SIPGPQDLLSPKRTEQDVMRN) is disordered. Residues 434–445 (SPKRTEQDVMRN) show a composition bias toward basic and acidic residues.

As to quaternary structure, monomer, homodimer and homooligomer. Component of a Polycomb group (PcG) multiprotein PRC1-like complex. Interacts with PHC2 and NR2E3. Interacts with RNF1 in a PHC2-dependent manner. Interacts with SAMD11. In terms of tissue distribution, expressed in the retina and the pineal gland. In the retina, it is predominantly expressed in the outer nuclear layer and developing rod photoreceptors.

The protein localises to the nucleus. Its subcellular location is the cytoplasm. Its function is as follows. Component of a Polycomb group (PcG) multiprotein PRC1-like complex, essential for establishing rod photoreceptor cell identity and function by silencing nonrod gene expression in developing rod photoreceptor cells. Via its association with the PRC1-like complex, promotes epigenetic repressive marks H3K27me3 and H2AK119ub marks in nonrod genes, silencing their transcription. Represses Crx-controlled photoreceptor-specific gene expression. This chain is Sterile alpha motif domain-containing protein 7 (Samd7), found in Mus musculus (Mouse).